A 51-amino-acid chain; its full sequence is ATP synthase F(1) complex subunit epsilon, mitochondrial (51 aa).

Residues lysine 21, lysine 32, and lysine 37 each carry the N6-acetyllysine; alternate modification. An N6-succinyllysine; alternate mark is found at lysine 21, lysine 32, and lysine 37. Lysine 44 is subject to N6-acetyllysine.

This sequence belongs to the eukaryotic ATPase epsilon family. Component of the ATP synthase complex composed at least of ATP5F1A/subunit alpha, ATP5F1B/subunit beta, ATP5MC1/subunit c (homooctomer), MT-ATP6/subunit a, MT-ATP8/subunit 8, ATP5ME/subunit e, ATP5MF/subunit f, ATP5MG/subunit g, ATP5MK/subunit k, ATP5MJ/subunit j, ATP5F1C/subunit gamma, ATP5F1D/subunit delta, ATP5F1E/subunit epsilon, ATP5PF/subunit F6, ATP5PB/subunit b, ATP5PD/subunit d, ATP5PO/subunit OSCP. ATP synthase complex consists of a soluble F(1) head domain (subunits alpha(3) and beta(3)) - the catalytic core - and a membrane F(0) domain - the membrane proton channel (subunits c, a, 8, e, f, g, k and j). These two domains are linked by a central stalk (subunits gamma, delta, and epsilon) rotating inside the F1 region and a stationary peripheral stalk (subunits F6, b, d, and OSCP).

The protein localises to the mitochondrion. Its subcellular location is the mitochondrion inner membrane. In terms of biological role, subunit epsilon, of the mitochondrial membrane ATP synthase complex (F(1)F(0) ATP synthase or Complex V) that produces ATP from ADP in the presence of a proton gradient across the membrane which is generated by electron transport complexes of the respiratory chain. ATP synthase complex consist of a soluble F(1) head domain - the catalytic core - and a membrane F(1) domain - the membrane proton channel. These two domains are linked by a central stalk rotating inside the F(1) region and a stationary peripheral stalk. During catalysis, ATP synthesis in the catalytic domain of F(1) is coupled via a rotary mechanism of the central stalk subunits to proton translocation. In vivo, can only synthesize ATP although its ATP hydrolase activity can be activated artificially in vitro. May be essential for the assembly of F(1) and may play an important role in the incorporation of the hydrophobic subunit c into the F(1)-c oligomer rotor of the mitochondrial ATP synthase complex. The sequence is that of ATP synthase F(1) complex subunit epsilon, mitochondrial from Rattus norvegicus (Rat).